The primary structure comprises 451 residues: Probable gamma-glutamyl phosphate reductase (451 aa).

It belongs to the gamma-glutamyl phosphate reductase family.

The enzyme catalyses L-glutamate 5-semialdehyde + phosphate + NADP(+) = L-glutamyl 5-phosphate + NADPH + H(+). It functions in the pathway amino-acid biosynthesis; L-proline biosynthesis; L-glutamate 5-semialdehyde from L-glutamate: step 2/2. Catalyzes the NADPH dependent reduction of L-gamma-glutamyl 5-phosphate into L-glutamate 5-semialdehyde and phosphate. The product spontaneously undergoes cyclization to form 1-pyrroline-5-carboxylate. The protein is Probable gamma-glutamyl phosphate reductase (pro1) of Schizosaccharomyces pombe (strain 972 / ATCC 24843) (Fission yeast).